We begin with the raw amino-acid sequence, 164 residues long: ATP synthase subunit b 2 (164 aa).

Residues 4–24 (TFWAFVGLVLFLALLVYFQIP) traverse the membrane as a helical segment.

This sequence belongs to the ATPase B chain family. In terms of assembly, F-type ATPases have 2 components, F(1) - the catalytic core - and F(0) - the membrane proton channel. F(1) has five subunits: alpha(3), beta(3), gamma(1), delta(1), epsilon(1). F(0) has three main subunits: a(1), b(2) and c(10-14). The alpha and beta chains form an alternating ring which encloses part of the gamma chain. F(1) is attached to F(0) by a central stalk formed by the gamma and epsilon chains, while a peripheral stalk is formed by the delta and b chains.

It localises to the cell inner membrane. In terms of biological role, f(1)F(0) ATP synthase produces ATP from ADP in the presence of a proton or sodium gradient. F-type ATPases consist of two structural domains, F(1) containing the extramembraneous catalytic core and F(0) containing the membrane proton channel, linked together by a central stalk and a peripheral stalk. During catalysis, ATP synthesis in the catalytic domain of F(1) is coupled via a rotary mechanism of the central stalk subunits to proton translocation. Functionally, component of the F(0) channel, it forms part of the peripheral stalk, linking F(1) to F(0). The chain is ATP synthase subunit b 2 from Bartonella tribocorum (strain CIP 105476 / IBS 506).